The following is a 230-amino-acid chain: Cytochrome b6-f complex iron-sulfur subunit, chloroplastic (230 aa).

Residues 1–16 show a composition bias toward low complexity; it reads MASTTLSATPTPSQLS. The segment at 1-20 is disordered; the sequence is MASTTLSATPTPSQLSAAKN. A chloroplast-targeting transit peptide spans 1 to 56; that stretch reads MASTTLSATPTPSQLSAAKNGAYSPSRALLGKTARGLYPEKEMVSRKVTCQATSIP. A helical transmembrane segment spans residues 73 to 93; the sequence is LLGALSLPTAGMLIPYGAFFV. Positions 116–212 constitute a Rieske domain; the sequence is AAAWLKTHGP…CDISEEGKVV (97 aa). 4 residues coordinate [2Fe-2S] cluster: cysteine 158, histidine 160, cysteine 176, and histidine 179. The cysteines at positions 163 and 178 are disulfide-linked.

The protein belongs to the Rieske iron-sulfur protein family. As to quaternary structure, the 4 large subunits of the cytochrome b6-f complex are cytochrome b6, subunit IV (17 kDa polypeptide, petD), cytochrome f and the Rieske protein, while the 4 small subunits are petG, petL, petM and petN. The complex functions as a dimer. It depends on [2Fe-2S] cluster as a cofactor.

The protein localises to the plastid. It is found in the chloroplast thylakoid membrane. It catalyses the reaction 2 oxidized [plastocyanin] + a plastoquinol + 2 H(+)(in) = 2 reduced [plastocyanin] + a plastoquinone + 4 H(+)(out). Its function is as follows. Component of the cytochrome b6-f complex, which mediates electron transfer between photosystem II (PSII) and photosystem I (PSI), cyclic electron flow around PSI, and state transitions. This is Cytochrome b6-f complex iron-sulfur subunit, chloroplastic (petC) from Fritillaria agrestis (Stinkbells).